The sequence spans 173 residues: Photosystem I assembly protein Ycf3 (173 aa).

3 TPR repeats span residues 35 to 68 (AFVY…EEDP), 72 to 105 (SYIL…NPRM), and 120 to 153 (GEKA…APNN).

It belongs to the Ycf3 family.

It is found in the cellular thylakoid membrane. Its function is as follows. Essential for the assembly of the photosystem I (PSI) complex. May act as a chaperone-like factor to guide the assembly of the PSI subunits. This is Photosystem I assembly protein Ycf3 from Microcystis aeruginosa (strain NIES-843 / IAM M-2473).